The following is a 341-amino-acid chain: Transmembrane protein 120A-A (341 aa).

The Cytoplasmic portion of the chain corresponds to 1-131 (MLFNPTGLTE…KQSKFAYKDE (131 aa)). Position 129 (K129) interacts with CoA. Residues 132–151 (YEKFKLYLTVLLLFFSFTCR) form a helical membrane-spanning segment. The Extracellular portion of the chain corresponds to 152–157 (FLVSYR). A helical transmembrane segment spans residues 158–176 (VVDALFNFLLVWYYCTLTI). The Cytoplasmic portion of the chain corresponds to 177–189 (RESILINNGSKIK). Positions 186 and 187 each coordinate CoA. A helical transmembrane segment spans residues 190 to 208 (GWWVFQHYVSTFLSGVMLT). Over 209–217 (WPDGELYQM) the chain is Extracellular. A helical transmembrane segment spans residues 218 to 239 (FRNQFLSYSMYINFVQFFQYYY). CoA contacts are provided by Q236, Y239, Q240, and H282. The Cytoplasmic segment spans residues 240–269 (QSGCLYRLRALGERHNMDLTVEGFQSWMWR). The helical transmembrane segment at 270–293 (GLTFLLPFLFLGHFFQLYNGITLF) threads the bilayer. The Extracellular segment spans residues 294–303 (QMTQLPEWKE). A helical membrane pass occupies residues 304–329 (WQVLMCGSTFLVLFMGNFFTTLGVVY). The Cytoplasmic segment spans residues 330-341 (HKYMDQDKAKGL). K331 provides a ligand contact to CoA.

It belongs to the TMEM120 family. In terms of assembly, homodimer.

It is found in the cell membrane. The protein resides in the nucleus inner membrane. It localises to the endoplasmic reticulum. In terms of biological role, multifunctional protein involved in mechanosensation, and plays an essential role in lipid metabolism. May function as a potential ion channel involved in sensing mechanical stimuli. TMEM120A is structurally similar to a lipid-modifying enzyme, ELOVL7, and contains a bound coenzyme A molecule, which suggests it might function as an enzyme in lipid metabolism. In Danio rerio (Zebrafish), this protein is Transmembrane protein 120A-A (tmem120aa).